The primary structure comprises 141 residues: Hemoglobin subunit alpha (141 aa).

Positions 1 to 141 constitute a Globin domain; that stretch reads VLSPADKTNV…VSTVLTSKYR (141 aa). Serine 3 is subject to Phosphoserine. Lysine 7 bears the N6-succinyllysine mark. Phosphothreonine is present on threonine 8. Lysine 11 is modified (N6-succinyllysine). Lysine 16 bears the N6-acetyllysine; alternate mark. N6-succinyllysine; alternate is present on lysine 16. The residue at position 24 (tyrosine 24) is a Phosphotyrosine. Serine 35 is subject to Phosphoserine. Position 40 is an N6-succinyllysine (lysine 40). Serine 49 is subject to Phosphoserine. Histidine 58 is an O2 binding site. Histidine 87 serves as a coordination point for heme b. Serine 102 bears the Phosphoserine mark. Residue threonine 108 is modified to Phosphothreonine. Phosphoserine is present on residues serine 124 and serine 131. Phosphothreonine occurs at positions 134 and 137. Serine 138 is modified (phosphoserine).

Belongs to the globin family. In terms of assembly, heterotetramer of two alpha chains and two beta chains. In terms of tissue distribution, red blood cells.

Involved in oxygen transport from the lung to the various peripheral tissues. In terms of biological role, hemopressin acts as an antagonist peptide of the cannabinoid receptor CNR1. Hemopressin-binding efficiently blocks cannabinoid receptor CNR1 and subsequent signaling. The sequence is that of Hemoglobin subunit alpha (HBA) from Loris tardigradus (Slender loris).